The primary structure comprises 95 residues: Co-chaperonin GroES (95 aa).

It belongs to the GroES chaperonin family. Heptamer of 7 subunits arranged in a ring. Interacts with the chaperonin GroEL.

The protein resides in the cytoplasm. Together with the chaperonin GroEL, plays an essential role in assisting protein folding. The GroEL-GroES system forms a nano-cage that allows encapsulation of the non-native substrate proteins and provides a physical environment optimized to promote and accelerate protein folding. GroES binds to the apical surface of the GroEL ring, thereby capping the opening of the GroEL channel. The protein is Co-chaperonin GroES of Rickettsia prowazekii (strain Madrid E).